A 130-amino-acid polypeptide reads, in one-letter code: MSMQDPIADMLTRIRNGQAANKVAVTMPSSKLKVAIANVLKEEGFIEDFKIEGDTKPVLELALKYFQGKAVVESIQRISRPGLRIYKKKDELPKVMAGLGIAVISTSKGVMTDRAARQAGLGGEIICYVA.

The protein belongs to the universal ribosomal protein uS8 family. Part of the 30S ribosomal subunit. Contacts proteins S5 and S12.

One of the primary rRNA binding proteins, it binds directly to 16S rRNA central domain where it helps coordinate assembly of the platform of the 30S subunit. The protein is Small ribosomal subunit protein uS8 of Yersinia pseudotuberculosis serotype O:1b (strain IP 31758).